A 240-amino-acid polypeptide reads, in one-letter code: Protein RoBo-1 (240 aa).

Residues 1-26 (MSWFLVLKCLLTVCIISHLSVSSTES) form the signal peptide. A glycan (N-linked (GlcNAc...) asparagine) is linked at Asn42. Disulfide bonds link Cys47/Cys76, Cys81/Cys102, Cys103/Cys108, Cys127/Cys151, and Cys144/Cys171. Asn153 carries an N-linked (GlcNAc...) asparagine glycan.

Belongs to the CNF-like-inhibitor family. N-glycosylated. As to expression, expressed abundantly in bone, including the lengthening growth plate where cartilage is remodeled into bone.

It localises to the secreted. May play a novel role in the growth or remodeling of bone. This Rattus norvegicus (Rat) protein is Protein RoBo-1.